The primary structure comprises 272 residues: Acidic leucine-rich nuclear phosphoprotein 32-related protein 2 (272 aa).

LRR repeat units follow at residues Ser57–Pro78, Ala79–Ala100, and Thr106–Ala127. An LRRCT domain is found at Cys139–Glu184. A disordered region spans residues Gly163 to Asn272. The segment covering Met164 to Glu241 has biased composition (acidic residues). Polar residues predominate over residues Ser248–Pro257.

It belongs to the ANP32 family.

This is Acidic leucine-rich nuclear phosphoprotein 32-related protein 2 from Oryza sativa subsp. japonica (Rice).